Reading from the N-terminus, the 212-residue chain is Pyridoxine/pyridoxamine 5'-phosphate oxidase (212 aa).

Residues R8–Y11 and K66 each bind substrate. FMN-binding positions include R61–K66, F76–T77, K83, and Q105. Y123, R127, and S131 together coordinate substrate. FMN-binding positions include Q140–S141 and W185. Residue R191–H193 participates in substrate binding. Residue R195 participates in FMN binding.

It belongs to the pyridoxamine 5'-phosphate oxidase family. As to quaternary structure, homodimer. The cofactor is FMN.

The catalysed reaction is pyridoxamine 5'-phosphate + O2 + H2O = pyridoxal 5'-phosphate + H2O2 + NH4(+). The enzyme catalyses pyridoxine 5'-phosphate + O2 = pyridoxal 5'-phosphate + H2O2. Its pathway is cofactor metabolism; pyridoxal 5'-phosphate salvage; pyridoxal 5'-phosphate from pyridoxamine 5'-phosphate: step 1/1. The protein operates within cofactor metabolism; pyridoxal 5'-phosphate salvage; pyridoxal 5'-phosphate from pyridoxine 5'-phosphate: step 1/1. In terms of biological role, catalyzes the oxidation of either pyridoxine 5'-phosphate (PNP) or pyridoxamine 5'-phosphate (PMP) into pyridoxal 5'-phosphate (PLP). The polypeptide is Pyridoxine/pyridoxamine 5'-phosphate oxidase (Leptospira biflexa serovar Patoc (strain Patoc 1 / Ames)).